The primary structure comprises 418 residues: Imidazolonepropionase (418 aa).

The Fe(3+) site is built by H79 and H81. Residues H79 and H81 each coordinate Zn(2+). 4-imidazolone-5-propanoate is bound by residues R88, Y151, and H184. Y151 lines the N-formimidoyl-L-glutamate pocket. H249 contributes to the Fe(3+) binding site. Residue H249 participates in Zn(2+) binding. Q252 contributes to the 4-imidazolone-5-propanoate binding site. D324 lines the Fe(3+) pocket. Residue D324 participates in Zn(2+) binding. N-formimidoyl-L-glutamate is bound by residues N326 and G328. T329 contributes to the 4-imidazolone-5-propanoate binding site.

It belongs to the metallo-dependent hydrolases superfamily. HutI family. The cofactor is Zn(2+). Fe(3+) is required as a cofactor.

The protein localises to the cytoplasm. It carries out the reaction 4-imidazolone-5-propanoate + H2O = N-formimidoyl-L-glutamate. The protein operates within amino-acid degradation; L-histidine degradation into L-glutamate; N-formimidoyl-L-glutamate from L-histidine: step 3/3. Catalyzes the hydrolytic cleavage of the carbon-nitrogen bond in imidazolone-5-propanoate to yield N-formimidoyl-L-glutamate. It is the third step in the universal histidine degradation pathway. This is Imidazolonepropionase from Colwellia psychrerythraea (strain 34H / ATCC BAA-681) (Vibrio psychroerythus).